Consider the following 146-residue polypeptide: uncharacterized protein (146 aa).

The region spanning 9–141 is the HTH marR-type domain; the sequence is VADIEKSLRH…FEKSLMKLQH (133 aa). Positions 55-78 form a DNA-binding region, H-T-H motif; it reads IGELSGKMYLACSTTTDLIDRMQK.

This is an uncharacterized protein from Bacillus subtilis (strain 168).